Consider the following 527-residue polypeptide: 4-alpha-glucanotransferase (527 aa).

The protein belongs to the disproportionating enzyme family.

The protein resides in the cytoplasm. The enzyme catalyses Transfers a segment of a (1-&gt;4)-alpha-D-glucan to a new position in an acceptor, which may be glucose or a (1-&gt;4)-alpha-D-glucan.. This chain is 4-alpha-glucanotransferase (malQ), found in Chlamydia trachomatis serovar D (strain ATCC VR-885 / DSM 19411 / UW-3/Cx).